The following is a 476-amino-acid chain: Methylenetetrahydrofolate--tRNA-(uracil-5-)-methyltransferase TrmFO (476 aa).

13-18 (GGGLAG) is a binding site for FAD. Residues 425 to 446 (PPLESPPTHGADGKKLRGPDKT) form a disordered region. Residues 435-446 (ADGKKLRGPDKT) show a composition bias toward basic and acidic residues.

It belongs to the MnmG family. TrmFO subfamily. FAD is required as a cofactor.

The protein localises to the cytoplasm. The catalysed reaction is uridine(54) in tRNA + (6R)-5,10-methylene-5,6,7,8-tetrahydrofolate + NADH + H(+) = 5-methyluridine(54) in tRNA + (6S)-5,6,7,8-tetrahydrofolate + NAD(+). It catalyses the reaction uridine(54) in tRNA + (6R)-5,10-methylene-5,6,7,8-tetrahydrofolate + NADPH + H(+) = 5-methyluridine(54) in tRNA + (6S)-5,6,7,8-tetrahydrofolate + NADP(+). Functionally, catalyzes the folate-dependent formation of 5-methyl-uridine at position 54 (M-5-U54) in all tRNAs. The sequence is that of Methylenetetrahydrofolate--tRNA-(uracil-5-)-methyltransferase TrmFO from Rhodopseudomonas palustris (strain BisB18).